A 420-amino-acid polypeptide reads, in one-letter code: Protein translocase subunit SecY (420 aa).

The next 10 helical transmembrane spans lie at 9–29 (ILIT…PIPG), 61–81 (LSII…MELL), 104–124 (IVRY…SVGL), 141–161 (VFMI…MWIG), 173–193 (ISLI…SGTF), 203–223 (ILML…IIYV), 257–277 (LSGV…STIL), 300–320 (YNIL…SIVF), 355–375 (KLTL…WILV), and 377–397 (AMGV…QVAI).

It belongs to the SecY/SEC61-alpha family. As to quaternary structure, component of the Sec protein translocase complex. Heterotrimer consisting of SecY, SecE and SecG subunits. The heterotrimers can form oligomers, although 1 heterotrimer is thought to be able to translocate proteins. Interacts with the ribosome. Interacts with SecDF, and other proteins may be involved. Interacts with SecA.

It localises to the cell inner membrane. Its function is as follows. The central subunit of the protein translocation channel SecYEG. Consists of two halves formed by TMs 1-5 and 6-10. These two domains form a lateral gate at the front which open onto the bilayer between TMs 2 and 7, and are clamped together by SecE at the back. The channel is closed by both a pore ring composed of hydrophobic SecY resides and a short helix (helix 2A) on the extracellular side of the membrane which forms a plug. The plug probably moves laterally to allow the channel to open. The ring and the pore may move independently. In Helicobacter pylori (strain ATCC 700392 / 26695) (Campylobacter pylori), this protein is Protein translocase subunit SecY.